Consider the following 161-residue polypeptide: Phosphopantetheine adenylyltransferase (161 aa).

Threonine 9 contacts substrate. Residues 9 to 10 (TF) and histidine 17 each bind ATP. Residues lysine 41, leucine 73, and arginine 87 each coordinate substrate. Residues 88-90 (GMR), glutamate 98, and 123-129 (WSYVSST) each bind ATP.

Belongs to the bacterial CoaD family. In terms of assembly, homohexamer. Mg(2+) serves as cofactor.

It localises to the cytoplasm. The catalysed reaction is (R)-4'-phosphopantetheine + ATP + H(+) = 3'-dephospho-CoA + diphosphate. The protein operates within cofactor biosynthesis; coenzyme A biosynthesis; CoA from (R)-pantothenate: step 4/5. Its function is as follows. Reversibly transfers an adenylyl group from ATP to 4'-phosphopantetheine, yielding dephospho-CoA (dPCoA) and pyrophosphate. This is Phosphopantetheine adenylyltransferase from Actinobacillus succinogenes (strain ATCC 55618 / DSM 22257 / CCUG 43843 / 130Z).